Consider the following 1079-residue polypeptide: MAASGPAAAAPSGVLVTCGLEQVLEALKLLLSPGGSGSSSLQNTKHDVLLQTLKSNLSALEAKFLKDAQWKKLKALRDELADKAEWPQSSEDITWSFTSQTLLLLLCLKEVLARLVADFNPGKPNPRTPEAAPALSPDTLSVSQQKTFQSVLQFVVTLGVCPYLIPGVGVPLRDRTEFGAVVQDVVRLEAAPHATRRLYICCRVLLDLAQHASLGSLIFCRHFGDIAAGLCQLGFCPTKRKPPGPVEEVLTEEERTLSRRALRDILDQVYQPLAVRELLTLQGGPRQPCTDVKTQLRCRAQAPAWLRRLCGQLLSERLMRPNGVQAVVRGILEGAGAGAAGGSDAEATAADWRKCDLIAKILASCPQQSLSPESYYKDICPQILDLFHLQDKLTARQFQRVATTTFITLSRERPELAAKYLLQPMLAPLQRCLSTAEIPESDMVPGAILVTEEELSRCVEDVFKVYVVANEPVPVLLDSLLPLLRVFFSLYCFTQQSVSHIRSLCQEILLWILVKLERKKAIASLKGFSGLDKTVPTLHPQCQFRAATHGGIVITAKEAISDDEDEALYQKVSSEQSQVEHLGDLLLHCQQCGLAGDFFIFCLKELSHLLEDREAEFTPKPSCYASLLELEHHQTLLIEDQERKLQVLQLLAVLCEKMSEQIFTHVTQVVDFVAATLQRACAGLAHEAESAVGSQTLSMSMGLVAVMLGGAVQLKSSDFAVLKQLLPLLERVSNTYPDPVIQELAADLRITISTHGAFSTDAVSTAAQSTLNQKDPGQKIEEQRQTSPDISTEGAQKPPRTGQGSSGPCTATSQPPGSITTQQFREVLLSACDPEVPTRAAALRTLARWVEQREARALEEQKKLLQIFLENLEHEDSFVYLSAIQGIALLSDVYPEEILVDLLAKYDSGKDKHTPETRMKVGEVLMRVVRALGDMVSKYREPLIHTFLRGVRDPDAAHRASSLANLGELCQCLHFLLGPVVHEVTACLIAVAKTDNDVQVRRAAVHVVVLLLRGLSQKATEVLSDVLRDLYHLLKHVVRLEPDDVAKLHAQLALEELDEIMRNFLFPPQKLEKKIVVLP.

A helical transmembrane segment spans residues 473–493 (VPVLLDSLLPLLRVFFSLYCF). The residue at position 561 (Ser561) is a Phosphoserine. Residues 767 to 818 (AQSTLNQKDPGQKIEEQRQTSPDISTEGAQKPPRTGQGSSGPCTATSQPPGS) form a disordered region. 2 stretches are compositionally biased toward polar residues: residues 785-794 (QTSPDISTEG) and 802-818 (GQGS…PPGS). HEAT repeat units follow at residues 864 to 902 (LLQI…LVDL) and 937 to 973 (SKYR…CQCL).

The protein belongs to the Tango6 family.

It localises to the membrane. This chain is Transport and Golgi organization protein 6 homolog (Tango6), found in Mus musculus (Mouse).